Consider the following 228-residue polypeptide: Ribonuclease 3 (228 aa).

The RNase III domain maps to 2-130 (LTYLEQKINY…LLAAVYLDGG (129 aa)). Glu43 is a binding site for Mg(2+). The active site involves Asp47. Mg(2+) contacts are provided by Asp116 and Glu119. Glu119 is a catalytic residue. The DRBM domain maps to 157 to 226 (DYKTRLQEVV…AMEALSKLGI (70 aa)).

Belongs to the ribonuclease III family. As to quaternary structure, homodimer. The cofactor is Mg(2+).

It localises to the cytoplasm. The enzyme catalyses Endonucleolytic cleavage to 5'-phosphomonoester.. In terms of biological role, digests double-stranded RNA. Involved in the processing of primary rRNA transcript to yield the immediate precursors to the large and small rRNAs (23S and 16S). Processes some mRNAs, and tRNAs when they are encoded in the rRNA operon. Processes pre-crRNA and tracrRNA of type II CRISPR loci if present in the organism. This is Ribonuclease 3 from Caldanaerobacter subterraneus subsp. tengcongensis (strain DSM 15242 / JCM 11007 / NBRC 100824 / MB4) (Thermoanaerobacter tengcongensis).